The chain runs to 266 residues: Cysteine-rich repeat secretory protein 41 (266 aa).

The signal sequence occupies residues 1 to 26; sequence MSSVFGSVHILAMIAIQLLLTHSVSS. Gnk2-homologous domains lie at 33–136 and 142–253; these read YLHH…SVAS and YEND…LYPF.

This sequence belongs to the cysteine-rich repeat secretory protein family.

Its subcellular location is the secreted. This chain is Cysteine-rich repeat secretory protein 41 (CRRSP41), found in Arabidopsis thaliana (Mouse-ear cress).